Here is a 133-residue protein sequence, read N- to C-terminus: Peptide methionine sulfoxide reductase MsrB (133 aa).

Positions 8 to 130 (LEEWRAMLDP…NSVCLDFKPR (123 aa)) constitute a MsrB domain. Positions 47, 50, 96, and 99 each coordinate Zn(2+). The Nucleophile role is filled by Cys-119.

The protein belongs to the MsrB Met sulfoxide reductase family. Requires Zn(2+) as cofactor.

The enzyme catalyses L-methionyl-[protein] + [thioredoxin]-disulfide + H2O = L-methionyl-(R)-S-oxide-[protein] + [thioredoxin]-dithiol. In Pseudomonas putida (strain W619), this protein is Peptide methionine sulfoxide reductase MsrB.